Reading from the N-terminus, the 74-residue chain is UPF0346 protein BPUM_1890 (74 aa).

Belongs to the UPF0346 family.

The polypeptide is UPF0346 protein BPUM_1890 (Bacillus pumilus (strain SAFR-032)).